Consider the following 158-residue polypeptide: 2-C-methyl-D-erythritol 2,4-cyclodiphosphate synthase (158 aa).

Asp9 and His11 together coordinate a divalent metal cation. Residues 9–11 and 35–36 each bind 4-CDP-2-C-methyl-D-erythritol 2-phosphate; these read DVH and HS. His43 is a binding site for a divalent metal cation. Residues 57–59, 62–66, 101–107, 133–136, Phe140, and Arg143 each bind 4-CDP-2-C-methyl-D-erythritol 2-phosphate; these read DIG, FPDTD, AQKPKMA, and TTTE.

Belongs to the IspF family. Homotrimer. A divalent metal cation serves as cofactor.

It catalyses the reaction 4-CDP-2-C-methyl-D-erythritol 2-phosphate = 2-C-methyl-D-erythritol 2,4-cyclic diphosphate + CMP. The protein operates within isoprenoid biosynthesis; isopentenyl diphosphate biosynthesis via DXP pathway; isopentenyl diphosphate from 1-deoxy-D-xylulose 5-phosphate: step 4/6. Functionally, involved in the biosynthesis of isopentenyl diphosphate (IPP) and dimethylallyl diphosphate (DMAPP), two major building blocks of isoprenoid compounds. Catalyzes the conversion of 4-diphosphocytidyl-2-C-methyl-D-erythritol 2-phosphate (CDP-ME2P) to 2-C-methyl-D-erythritol 2,4-cyclodiphosphate (ME-CPP) with a corresponding release of cytidine 5-monophosphate (CMP). This Bacillus thuringiensis subsp. konkukian (strain 97-27) protein is 2-C-methyl-D-erythritol 2,4-cyclodiphosphate synthase.